The following is a 210-amino-acid chain: Phosphate propanoyltransferase (210 aa).

A CoA-binding site is contributed by Val-26–Asn-28. Positions 30 and 32 each coordinate Zn(2+). Positions 71 and 78 each coordinate CoA. Arg-84 lines the phosphate pocket. 4 residues coordinate Zn(2+): Glu-90, His-138, His-140, and His-186. Asn-193 serves as a coordination point for CoA.

It belongs to the PduL family. In terms of assembly, monomer, when purified in the absence of the encapsulation peptide (EP, residues 1-27). The EP may influence oligomerization. The cofactor is Zn(2+).

Its subcellular location is the bacterial microcompartment. It catalyses the reaction propanoyl-CoA + phosphate = propanoyl phosphate + CoA. The protein operates within polyol metabolism; 1,2-propanediol degradation. Involved in 1,2-propanediol (1,2-PD) utilization in the bacterial microcompartment (BMC) dedicated to 1,2-PD degradation by catalyzing the conversion of propanoyl-CoA to propanoyl-phosphate. Also able to catalyze the reverse reaction. Also has phosphate acetyltransferase activity to a lesser extent. Required for optimal growth on 1,2-PD when the BMC is intact. CoA is regenerated within the BMC (for use by PduP) via this enzyme, although there must also be cofactor transport across the BMC. Directly targeted to the BMC. In terms of biological role, the 1,2-PD-specific bacterial microcompartment (BMC) concentrates low levels of 1,2-PD catabolic enzymes, concentrates volatile reaction intermediates thus enhancing pathway flux and keeps the level of toxic, mutagenic propionaldehyde low. The protein is Phosphate propanoyltransferase of Salmonella typhimurium (strain LT2 / SGSC1412 / ATCC 700720).